A 2552-amino-acid chain; its full sequence is Probable polyketide synthase 40 (2552 aa).

The Ketosynthase family 3 (KS3) domain maps to 13 to 443 (CNKVAIIGIG…GSNCCLIVSS (431 aa)). Active-site for beta-ketoacyl synthase activity residues include cysteine 179, histidine 320, and histidine 362. Positions 629–662 (GIKPSIIVGHSLGEISSSYCSGMIDLDTFCYLIY) are acyl/malonyl transferase. Residue serine 639 is the For acyl/malonyl transferase activity of the active site. Positions 928-1063 (INHLGISNSN…ANFQLFSRGQ (136 aa)) are N-terminal hotdog fold. A PKS/mFAS DH domain is found at 928-1235 (INHLGISNSN…FKSTTKIKDS (308 aa)). Histidine 962 serves as the catalytic Proton acceptor; for dehydratase activity. The segment at 1087 to 1235 (NLTKLSKQEL…FKSTTKIKDS (149 aa)) is C-terminal hotdog fold. The active-site Proton donor; for dehydratase activity is the aspartate 1149. One can recognise a Carrier domain in the interval 2467-2546 (DNVELTVDQL…SFIQLVKNSI (80 aa)). Residue serine 2505 is modified to O-(pantetheine 4'-phosphoryl)serine.

Pantetheine 4'-phosphate serves as cofactor.

Its function is as follows. Probable polyketide synthase. The protein is Probable polyketide synthase 40 (pks40) of Dictyostelium discoideum (Social amoeba).